The sequence spans 876 residues: Leucine--tRNA ligase (876 aa).

The short motif at 42 to 52 (PYPSGKLHMGH) is the 'HIGH' region element. The 'KMSKS' region signature appears at 634-638 (KMSKS). Lys637 is a binding site for ATP.

This sequence belongs to the class-I aminoacyl-tRNA synthetase family.

Its subcellular location is the cytoplasm. It catalyses the reaction tRNA(Leu) + L-leucine + ATP = L-leucyl-tRNA(Leu) + AMP + diphosphate. The chain is Leucine--tRNA ligase from Neisseria meningitidis serogroup C (strain 053442).